The primary structure comprises 167 residues: Small heat shock protein C1 (167 aa).

One can recognise a sHSP domain in the interval 59 to 167; that stretch reads PLYESNSIKS…EQDAREITIN (109 aa).

This sequence belongs to the small heat shock protein (HSP20) family.

The protein is Small heat shock protein C1 (hspC1) of Rickettsia felis (strain ATCC VR-1525 / URRWXCal2) (Rickettsia azadi).